Consider the following 382-residue polypeptide: Anhydro-N-acetylmuramic acid kinase (382 aa).

22–29 (GTSMDGVD) contributes to the ATP binding site.

Belongs to the anhydro-N-acetylmuramic acid kinase family.

It catalyses the reaction 1,6-anhydro-N-acetyl-beta-muramate + ATP + H2O = N-acetyl-D-muramate 6-phosphate + ADP + H(+). The protein operates within amino-sugar metabolism; 1,6-anhydro-N-acetylmuramate degradation. It participates in cell wall biogenesis; peptidoglycan recycling. Catalyzes the specific phosphorylation of 1,6-anhydro-N-acetylmuramic acid (anhMurNAc) with the simultaneous cleavage of the 1,6-anhydro ring, generating MurNAc-6-P. Is required for the utilization of anhMurNAc either imported from the medium or derived from its own cell wall murein, and thus plays a role in cell wall recycling. The polypeptide is Anhydro-N-acetylmuramic acid kinase (Burkholderia vietnamiensis (strain G4 / LMG 22486) (Burkholderia cepacia (strain R1808))).